A 414-amino-acid polypeptide reads, in one-letter code: Multifunctional CCA protein (414 aa).

ATP contacts are provided by Gly-8 and Arg-11. Residues Gly-8 and Arg-11 each contribute to the CTP site. Residues Glu-21 and Asp-23 each contribute to the Mg(2+) site. Residues Arg-91, Arg-137, and Arg-140 each contribute to the ATP site. Positions 91, 137, and 140 each coordinate CTP. The 102-residue stretch at 228–329 (TGIHTMMTVA…LKLFDAIDVW (102 aa)) folds into the HD domain.

Belongs to the tRNA nucleotidyltransferase/poly(A) polymerase family. Bacterial CCA-adding enzyme type 1 subfamily. As to quaternary structure, monomer. Can also form homodimers and oligomers. Mg(2+) is required as a cofactor. Ni(2+) serves as cofactor.

The catalysed reaction is a tRNA precursor + 2 CTP + ATP = a tRNA with a 3' CCA end + 3 diphosphate. The enzyme catalyses a tRNA with a 3' CCA end + 2 CTP + ATP = a tRNA with a 3' CCACCA end + 3 diphosphate. In terms of biological role, catalyzes the addition and repair of the essential 3'-terminal CCA sequence in tRNAs without using a nucleic acid template. Adds these three nucleotides in the order of C, C, and A to the tRNA nucleotide-73, using CTP and ATP as substrates and producing inorganic pyrophosphate. tRNA 3'-terminal CCA addition is required both for tRNA processing and repair. Also involved in tRNA surveillance by mediating tandem CCA addition to generate a CCACCA at the 3' terminus of unstable tRNAs. While stable tRNAs receive only 3'-terminal CCA, unstable tRNAs are marked with CCACCA and rapidly degraded. The chain is Multifunctional CCA protein from Pectobacterium atrosepticum (strain SCRI 1043 / ATCC BAA-672) (Erwinia carotovora subsp. atroseptica).